The sequence spans 389 residues: S-adenosylmethionine synthase (389 aa).

Position 17 (His17) interacts with ATP. Asp19 contributes to the Mg(2+) binding site. Glu45 contributes to the K(+) binding site. Glu58 and Gln101 together coordinate L-methionine. Residues 101 to 111 (QSPDIAQGVTE) are flexible loop. ATP is bound by residues 168 to 170 (DSK), 234 to 235 (RF), Asp243, 249 to 250 (RK), Ala266, and Lys270. Residue Asp243 participates in L-methionine binding. L-methionine is bound at residue Lys274.

It belongs to the AdoMet synthase family. Homotetramer; dimer of dimers. It depends on Mg(2+) as a cofactor. K(+) serves as cofactor.

It is found in the cytoplasm. The catalysed reaction is L-methionine + ATP + H2O = S-adenosyl-L-methionine + phosphate + diphosphate. It functions in the pathway amino-acid biosynthesis; S-adenosyl-L-methionine biosynthesis; S-adenosyl-L-methionine from L-methionine: step 1/1. Catalyzes the formation of S-adenosylmethionine (AdoMet) from methionine and ATP. The overall synthetic reaction is composed of two sequential steps, AdoMet formation and the subsequent tripolyphosphate hydrolysis which occurs prior to release of AdoMet from the enzyme. This is S-adenosylmethionine synthase from Geobacter sp. (strain M21).